We begin with the raw amino-acid sequence, 424 residues long: UPF0229 protein PputGB1_0427 (424 aa).

A disordered region spans residues 81–107 (EFTAGEHIPRPQGGGGGGGGRGKAGNS). The span at 92 to 107 (QGGGGGGGGRGKAGNS) shows a compositional bias: gly residues.

It belongs to the UPF0229 family.

In Pseudomonas putida (strain GB-1), this protein is UPF0229 protein PputGB1_0427.